Here is a 343-residue protein sequence, read N- to C-terminus: Methionine import ATP-binding protein MetN 1 (343 aa).

The 240-residue stretch at isoleucine 2 to isoleucine 241 folds into the ABC transporter domain. Glycine 38–serine 45 contributes to the ATP binding site.

The protein belongs to the ABC transporter superfamily. Methionine importer (TC 3.A.1.24) family. As to quaternary structure, the complex is composed of two ATP-binding proteins (MetN), two transmembrane proteins (MetI) and a solute-binding protein (MetQ).

Its subcellular location is the cell inner membrane. The catalysed reaction is L-methionine(out) + ATP + H2O = L-methionine(in) + ADP + phosphate + H(+). It carries out the reaction D-methionine(out) + ATP + H2O = D-methionine(in) + ADP + phosphate + H(+). Part of the ABC transporter complex MetNIQ involved in methionine import. Responsible for energy coupling to the transport system. The polypeptide is Methionine import ATP-binding protein MetN 1 (Salmonella choleraesuis (strain SC-B67)).